A 325-amino-acid polypeptide reads, in one-letter code: Zinc finger C2HC domain-containing protein 1A (325 aa).

The C2HC/C3H-type 1 zinc finger occupies 15–44 (ELLPCKICGRTFFPVALKKHGPICQKTATK). Residues Cys-19, Cys-22, His-34, and Cys-38 each contribute to the Zn(2+) site. Residues 43–83 (TKKRKTFDSSRQRAEGTDIPTVKPLKPRPEPPKKPSNWRRK) are disordered. Basic and acidic residues predominate over residues 48–58 (TFDSSRQRAEG). The segment at 118-147 (DYIQCPYCQRRFNENAADRHINFCKEQAAR) adopts a C2HC/C3H-type 2 zinc-finger fold. Positions 122, 125, 137, and 141 each coordinate Zn(2+). The tract at residues 150–260 (NKGKFSTDTK…NPAPGVLTNK (111 aa)) is disordered. 2 stretches are compositionally biased toward low complexity: residues 177–188 (SNSPGTASSGSS) and 197–216 (GKTV…SSLG). Phosphoserine is present on Ser-223. Thr-244 is modified (phosphothreonine). The residue at position 292 (Ser-292) is a Phosphoserine.

This sequence belongs to the ZC2HC1 family. It depends on Zn(2+) as a cofactor.

The protein is Zinc finger C2HC domain-containing protein 1A (ZC2HC1A) of Homo sapiens (Human).